Here is a 787-residue protein sequence, read N- to C-terminus: Endonuclease MutS2 (787 aa).

336–343 (GPNTGGKT) lines the ATP pocket. In terms of domain architecture, Smr spans 712–787 (LDLRGVRYED…GNGATEVQFK (76 aa)).

It belongs to the DNA mismatch repair MutS family. MutS2 subfamily. Homodimer. Binds to stalled ribosomes, contacting rRNA.

Endonuclease that is involved in the suppression of homologous recombination and thus may have a key role in the control of bacterial genetic diversity. In terms of biological role, acts as a ribosome collision sensor, splitting the ribosome into its 2 subunits. Detects stalled/collided 70S ribosomes which it binds and splits by an ATP-hydrolysis driven conformational change. Acts upstream of the ribosome quality control system (RQC), a ribosome-associated complex that mediates the extraction of incompletely synthesized nascent chains from stalled ribosomes and their subsequent degradation. Probably generates substrates for RQC. This Lactiplantibacillus plantarum (strain ATCC BAA-793 / NCIMB 8826 / WCFS1) (Lactobacillus plantarum) protein is Endonuclease MutS2.